The chain runs to 172 residues: Cytochrome b6-f complex iron-sulfur subunit (172 aa).

The helical transmembrane segment at 17–39 threads the bilayer; the sequence is VFLNALLSSSVGVVVVGTLYPVV. Residues 61–161 enclose the Rieske domain; it reads GKPISVSELL…ATVDGDNVRF (101 aa). 4 residues coordinate [2Fe-2S] cluster: Cys107, His109, Cys125, and His128. Cys112 and Cys127 form a disulfide bridge.

It belongs to the Rieske iron-sulfur protein family. The 4 large subunits of the cytochrome b6-f complex are cytochrome b6, subunit IV (17 kDa polypeptide, PetD), cytochrome f and the Rieske protein, while the 4 small subunits are PetG, PetL, PetM and PetN. The complex functions as a dimer. It depends on [2Fe-2S] cluster as a cofactor.

It localises to the cellular thylakoid membrane. It carries out the reaction 2 oxidized [plastocyanin] + a plastoquinol + 2 H(+)(in) = 2 reduced [plastocyanin] + a plastoquinone + 4 H(+)(out). In terms of biological role, component of the cytochrome b6-f complex, which mediates electron transfer between photosystem II (PSII) and photosystem I (PSI), cyclic electron flow around PSI, and state transitions. The sequence is that of Cytochrome b6-f complex iron-sulfur subunit from Synechococcus sp. (strain JA-3-3Ab) (Cyanobacteria bacterium Yellowstone A-Prime).